We begin with the raw amino-acid sequence, 341 residues long: Lipoyl synthase (341 aa).

The [4Fe-4S] cluster site is built by cysteine 85, cysteine 90, cysteine 96, cysteine 111, cysteine 115, cysteine 118, and serine 325. In terms of domain architecture, Radical SAM core spans 97 to 314 (FSGGTATFMI…AEEGYKMGFK (218 aa)).

It belongs to the radical SAM superfamily. Lipoyl synthase family. It depends on [4Fe-4S] cluster as a cofactor.

The protein resides in the cytoplasm. The catalysed reaction is [[Fe-S] cluster scaffold protein carrying a second [4Fe-4S](2+) cluster] + N(6)-octanoyl-L-lysyl-[protein] + 2 oxidized [2Fe-2S]-[ferredoxin] + 2 S-adenosyl-L-methionine + 4 H(+) = [[Fe-S] cluster scaffold protein] + N(6)-[(R)-dihydrolipoyl]-L-lysyl-[protein] + 4 Fe(3+) + 2 hydrogen sulfide + 2 5'-deoxyadenosine + 2 L-methionine + 2 reduced [2Fe-2S]-[ferredoxin]. It functions in the pathway protein modification; protein lipoylation via endogenous pathway; protein N(6)-(lipoyl)lysine from octanoyl-[acyl-carrier-protein]: step 2/2. Functionally, catalyzes the radical-mediated insertion of two sulfur atoms into the C-6 and C-8 positions of the octanoyl moiety bound to the lipoyl domains of lipoate-dependent enzymes, thereby converting the octanoylated domains into lipoylated derivatives. This is Lipoyl synthase from Pseudomonas fluorescens (strain SBW25).